A 432-amino-acid chain; its full sequence is Putative D-alanyl-D-alanine carboxypeptidase (432 aa).

Residues 7–25 (ATVLLTFSLSAFAVEYPVL) traverse the membrane as a helical; Signal-anchor segment.

It belongs to the peptidase S12 family. YfeW subfamily.

The protein localises to the cell inner membrane. The enzyme catalyses Preferential cleavage: (Ac)2-L-Lys-D-Ala-|-D-Ala. Also transpeptidation of peptidyl-alanyl moieties that are N-acyl substituents of D-alanine.. This chain is Putative D-alanyl-D-alanine carboxypeptidase, found in Salmonella gallinarum (strain 287/91 / NCTC 13346).